A 375-amino-acid polypeptide reads, in one-letter code: Succinyl-diaminopimelate desuccinylase (375 aa).

H66 provides a ligand contact to Zn(2+). The active site involves D68. D99 is a binding site for Zn(2+). E133 (proton acceptor) is an active-site residue. The Zn(2+) site is built by E134, E162, and H348.

It belongs to the peptidase M20A family. DapE subfamily. Homodimer. Zn(2+) is required as a cofactor. Co(2+) serves as cofactor.

The catalysed reaction is N-succinyl-(2S,6S)-2,6-diaminopimelate + H2O = (2S,6S)-2,6-diaminopimelate + succinate. It participates in amino-acid biosynthesis; L-lysine biosynthesis via DAP pathway; LL-2,6-diaminopimelate from (S)-tetrahydrodipicolinate (succinylase route): step 3/3. Functionally, catalyzes the hydrolysis of N-succinyl-L,L-diaminopimelic acid (SDAP), forming succinate and LL-2,6-diaminopimelate (DAP), an intermediate involved in the bacterial biosynthesis of lysine and meso-diaminopimelic acid, an essential component of bacterial cell walls. The polypeptide is Succinyl-diaminopimelate desuccinylase (Alkalilimnicola ehrlichii (strain ATCC BAA-1101 / DSM 17681 / MLHE-1)).